A 426-amino-acid polypeptide reads, in one-letter code: Citrate transporter (426 aa).

Helical transmembrane passes span Met-1 to Arg-21, Leu-22 to Gly-42, Thr-59 to Phe-79, Ile-86 to Met-106, Leu-137 to Gly-157, Pro-176 to Gly-196, Leu-232 to Phe-252, Ala-278 to Leu-298, Ala-318 to Met-338, Phe-343 to Ala-363, Leu-377 to Gly-397, and Trp-406 to Phe-426.

It belongs to the CitM (TC 2.A.11) transporter family.

Its subcellular location is the cell membrane. Its function is as follows. Transports the free citrate anion. Probably cotransports citrate and at least three or four protons. The citrate uptake is inhibited by the presence of magnesium ions. This is Citrate transporter (citN) from Bacillus subtilis (strain 168).